A 239-amino-acid polypeptide reads, in one-letter code: RNA polymerase sigma factor FliA (239 aa).

The segment at 16 to 88 is sigma-70 factor domain-2; it reads LWQRYVPLVR…MLDELRSRDW (73 aa). Positions 43–46 match the Interaction with polymerase core subunit RpoC motif; the sequence is DLLQ. Residues 96 to 166 form a sigma-70 factor domain-3 region; sequence NAREVAQAIG…IELVTDDHQR (71 aa). Residues 185–233 are sigma-70 factor domain-4; sequence AIETLPEREKLVLTLYYQEELNLKEIGAVLEVGESRVSQLHSQAIKRLR. Positions 207 to 226 form a DNA-binding region, H-T-H motif; that stretch reads LKEIGAVLEVGESRVSQLHS.

Belongs to the sigma-70 factor family. FliA subfamily.

It localises to the cytoplasm. Its function is as follows. Sigma factors are initiation factors that promote the attachment of RNA polymerase to specific initiation sites and are then released. This sigma factor controls the expression of flagella-related genes. This chain is RNA polymerase sigma factor FliA, found in Escherichia coli O157:H7.